We begin with the raw amino-acid sequence, 249 residues long: Triosephosphate isomerase (249 aa).

12 to 14 (NWK) contributes to the substrate binding site. The active-site Electrophile is the His-96. Glu-166 (proton acceptor) is an active-site residue. Residues Gly-172, Ser-211, and 232 to 233 (GG) each bind substrate.

The protein belongs to the triosephosphate isomerase family. Homodimer.

It is found in the cytoplasm. It carries out the reaction D-glyceraldehyde 3-phosphate = dihydroxyacetone phosphate. It participates in carbohydrate biosynthesis; gluconeogenesis. The protein operates within carbohydrate degradation; glycolysis; D-glyceraldehyde 3-phosphate from glycerone phosphate: step 1/1. In terms of biological role, involved in the gluconeogenesis. Catalyzes stereospecifically the conversion of dihydroxyacetone phosphate (DHAP) to D-glyceraldehyde-3-phosphate (G3P). The chain is Triosephosphate isomerase from Xanthobacter flavus.